The primary structure comprises 311 residues: Progestin and adipoQ receptor family member 3 (311 aa).

The tract at residues 1 to 20 (MHQKLLKSAHYIELGSYQYW) is required for interaction with SREBF2. The Cytoplasmic portion of the chain corresponds to 1–70 (MHQKLLKSAH…KSLFILSNET (70 aa)). Positions 41 to 60 (KDNPYITDGYRAYLPSRLCI) are required for interaction with SCAP. The segment at 61–71 (KSLFILSNETV) is golgi targeting. A helical transmembrane segment spans residues 71-91 (VNIWSHLLGFFLFFTLGIYDM). Residues 92-104 (TSVLPSASASRED) lie on the Lumenal side of the membrane. Residues 105-125 (FVICSICLFCFQVCMLCSVGY) form a helical membrane-spanning segment. The Cytoplasmic segment spans residues 126–145 (HLFSCHRSEKTCRRWMALDY). A helical membrane pass occupies residues 146–166 (AGISIGILGCYVSGVFYAFYC). Residues 167-172 (NNYWRQ) are Lumenal-facing. Residues 173–193 (VYLITVLAMILAVFFAQIHPS) traverse the membrane as a helical segment. Residues 194–203 (YLTQQWQRLR) are Cytoplasmic-facing. Residues 204-224 (PIIFCSVSGYGVIPTLHWVWL) traverse the membrane as a helical segment. At 225-235 (NGGVSAPIVQD) the chain is on the lumenal side. The helical transmembrane segment at 236 to 256 (FAPRVIVMYVIALLAFLFYIS) threads the bilayer. Over 257–275 (KVPERYFPGQLNYLGSSHQ) the chain is Cytoplasmic. The chain crosses the membrane as a helical span at residues 276–296 (IWHVLAVVMLYWWHQSTVYVM). Over 297 to 311 (QYRHSKPCPDYVSHL) the chain is Lumenal. The tract at residues 299–303 (RHSKP) is golgi targeting.

It belongs to the ADIPOR family. Interacts with SCAP and SREBF2; the interactions are direct, increase in low cholesterol conditions and tether SCAP:SREBP complex to the Golgi apparatus. Interaction with SCAP is mutually exclusive with INSIG1. In hepatocytes, interacts with PPARA and HUWE1; the interactions promote PPARA poylubiquitination and HUWE1-mediated degradation. In macrophages, interacts with PPARG and STUB1; the interactions promote PPARG poylubiquitination and STUB1-mediated degradation.

It localises to the golgi apparatus membrane. Functionally, golgi-anchored protein which modulates its interactors acitivies by tethering them to the Golgi apparatus. Functions as a spatial regulator of RAF1 kinase by sequestrating it to the Golgi apparatus. Acts as a positive regulator of cholesterol biosynthesis by mediating the anchoring of the SCAP:SREBP complex in the Golgi apparatus, thereby promoting SCAP:SREBF2 complex formation, potentiating SREBF2 and SREBF1 processing and enhancing lipid synthesis. Also regulates PPARA and PPARG functions by mediating their interaction with E3 ubiquitin ligases, such as STUB1 or HUWE1, leading to their polyubiquitination and proteasome-mediated degradation. This chain is Progestin and adipoQ receptor family member 3, found in Mus musculus (Mouse).